The primary structure comprises 550 residues: Nucleoside hydrolase 4 (550 aa).

This sequence belongs to the IUNH family.

It localises to the cytoplasm. May be involved in the degradation of nucleosides. This Arabidopsis thaliana (Mouse-ear cress) protein is Nucleoside hydrolase 4.